Reading from the N-terminus, the 214-residue chain is Cytochrome b (214 aa).

A run of 4 helical transmembrane segments spans residues 31–51 (FGSM…FLAI), 75–96 (WIMQ…YIHI), 111–131 (WLSG…GYVL), and 176–196 (FFAL…LHIL). Heme b-binding residues include histidine 81 and histidine 95. Residues histidine 180 and histidine 194 each contribute to the heme b site. Histidine 199 contributes to the a ubiquinone binding site.

The protein belongs to the cytochrome b family. The cytochrome bc1 complex contains 3 respiratory subunits (MT-CYB, CYC1 and UQCRFS1), 2 core proteins (UQCRC1 and UQCRC2) and probably 6 low-molecular weight proteins. Requires heme b as cofactor.

The protein resides in the mitochondrion inner membrane. Its function is as follows. Component of the ubiquinol-cytochrome c reductase complex (complex III or cytochrome b-c1 complex) that is part of the mitochondrial respiratory chain. The b-c1 complex mediates electron transfer from ubiquinol to cytochrome c. Contributes to the generation of a proton gradient across the mitochondrial membrane that is then used for ATP synthesis. In Crotalus atrox (Western diamondback rattlesnake), this protein is Cytochrome b (MT-CYB).